A 507-amino-acid chain; its full sequence is Glycine, alanine and asparagine-rich protein (507 aa).

The N-terminal stretch at 1–17 (MLRVPLLVLCLALSVGA) is a signal peptide. Residues 158 to 185 (SAQALASATAELQAAQDAYDQASAYAEA) are a coiled coil. Positions 462–498 (GNGNGGNGRNGNGGNGRNGNGGNGGNGNGRNGRGGRY) are enriched in gly residues. Positions 462–507 (GNGNGGNGRNGNGGNGRNGNGGNGGNGNGRNGRGGRYYYGSSDYYY) are disordered.

As to expression, component of the acid-soluble and acid-insoluble organic matrix of calcified shell layers (at protein level).

The protein localises to the secreted. This Haliotis asinina (Donkey's ear abalone) protein is Glycine, alanine and asparagine-rich protein.